The sequence spans 491 residues: Serine hydroxymethyltransferase (491 aa).

Residues Leu-173 and 177 to 179 (GHL) contribute to the (6S)-5,6,7,8-tetrahydrofolate site. Residue Lys-285 is modified to N6-(pyridoxal phosphate)lysine.

The protein belongs to the SHMT family. As to quaternary structure, homodimer. It depends on pyridoxal 5'-phosphate as a cofactor.

It localises to the cytoplasm. It catalyses the reaction (6R)-5,10-methylene-5,6,7,8-tetrahydrofolate + glycine + H2O = (6S)-5,6,7,8-tetrahydrofolate + L-serine. It functions in the pathway one-carbon metabolism; tetrahydrofolate interconversion. It participates in amino-acid biosynthesis; glycine biosynthesis; glycine from L-serine: step 1/1. In terms of biological role, catalyzes the reversible interconversion of serine and glycine with tetrahydrofolate (THF) serving as the one-carbon carrier. This reaction serves as the major source of one-carbon groups required for the biosynthesis of purines, thymidylate, methionine, and other important biomolecules. Also exhibits THF-independent aldolase activity toward beta-hydroxyamino acids, producing glycine and aldehydes, via a retro-aldol mechanism. This is Serine hydroxymethyltransferase from Cutibacterium acnes (strain DSM 16379 / KPA171202) (Propionibacterium acnes).